The following is a 363-amino-acid chain: MAAISASAPYVARDRDLRNRALVRGWLYVVLLVLFALVLVGGATRLTESGLSITQWQPIHGVIPPLNDAEWQEEFQRYQQIPQYTELNKGMSIEAFKSIFWWEWAHRLLARSVGLVFALPLLFFWVSRRIERGLGPKLVGILLLGGLQGAIGWWMVASGLVDRVSVSQYRLATHLTLAALIFTATMVVARGLAPHSEPAADRSTQRLAGFIVLLALIQIYLGGLVAGLDAGLSYNTWPLMDGKIIPGDLLILEPAWRNFFESPKTVQFVHRLGAYTVFAVALWHMIATRRRLPGSTHARRATLLFVLVLVQASIGIGTLLMQVPLHMALTHQGFALIVLGFAAAHWRGTKGAYPLPQEIVLRS.

Helical transmembrane passes span 21–41 (ALVR…VLVG), 107–127 (RLLA…FWVS), 138–158 (LVGI…MVAS), 174–194 (HLTL…GLAP), 207–227 (LAGF…LVAG), 268–288 (FVHR…MIAT), 301–321 (ATLL…TLLM), and 323–343 (VPLH…GFAA). Residue His-270 participates in heme binding. His-331 is a heme binding site.

It belongs to the COX15/CtaA family. Type 2 subfamily. In terms of assembly, interacts with CtaB. The cofactor is heme b.

The protein resides in the cell membrane. The enzyme catalyses Fe(II)-heme o + 2 A + H2O = Fe(II)-heme a + 2 AH2. The protein operates within porphyrin-containing compound metabolism; heme A biosynthesis; heme A from heme O: step 1/1. Functionally, catalyzes the conversion of heme O to heme A by two successive hydroxylations of the methyl group at C8. The first hydroxylation forms heme I, the second hydroxylation results in an unstable dihydroxymethyl group, which spontaneously dehydrates, resulting in the formyl group of heme A. This chain is Heme A synthase, found in Mesorhizobium japonicum (strain LMG 29417 / CECT 9101 / MAFF 303099) (Mesorhizobium loti (strain MAFF 303099)).